A 1171-amino-acid polypeptide reads, in one-letter code: Putative tricorn protease homolog 2 (1171 aa).

Positions 432–498 (AGYPPDAGDE…GSPGTPATAG (67 aa)) are disordered. Low complexity-rich tracts occupy residues 444-456 (AGTA…APDA) and 466-498 (IAAG…ATAG). His-827 acts as the Charge relay system in catalysis. Residues 842 to 941 (YQRWQGLLGA…RVAVVPLVDE (100 aa)) form a PDZ-like region. Position 1002-1004 (1002-1004 (AGG)) interacts with substrate. Residue Ser-1051 is the Nucleophile of the active site. Residue 1079 to 1081 (GMT) coordinates substrate. The active-site Charge relay system is Glu-1109. Residues 1149 to 1171 (PPATPPGYEAVPDRSRPPLPPRE) are disordered. A compositionally biased stretch (basic and acidic residues) spans 1159–1171 (VPDRSRPPLPPRE).

This sequence belongs to the peptidase S41B family.

The protein localises to the cytoplasm. Functionally, degrades oligopeptides in a sequential manner. In Streptomyces coelicolor (strain ATCC BAA-471 / A3(2) / M145), this protein is Putative tricorn protease homolog 2 (tri2).